Consider the following 636-residue polypeptide: Autophagy-related protein 20 (636 aa).

Disordered stretches follow at residues 1 to 68 (MQIN…QPHE) and 84 to 163 (NYMQ…EGKK). Residues 10-23 (NSVTHLENNSPSRL) show a composition bias toward polar residues. Residues 27–49 (KTVEEHKEHEPDLQTQSEMRRES) are compositionally biased toward basic and acidic residues. The span at 50-64 (NGSPKDTAVTNQNGD) shows a compositional bias: polar residues. The span at 122–133 (NRRKNSKERRRS) shows a compositional bias: basic residues. Positions 160-305 (EGKKRAQILE…DFLDPNNKNW (146 aa)) constitute a PX domain. 4 residues coordinate a 1,2-diacyl-sn-glycero-3-phospho-(1D-myo-inositol-3-phosphate): arginine 196, serine 198, lysine 222, and arginine 271.

The protein belongs to the sorting nexin family.

The protein resides in the endosome membrane. It is found in the preautophagosomal structure membrane. Functionally, required for cytoplasm to vacuole transport (Cvt), pexophagy and mitophagy. Also involved in endoplasmic reticulum-specific autophagic process and is essential for the survival of cells subjected to severe ER stress. Functions in protein retrieval from the endocytic pathway. This is Autophagy-related protein 20 (ATG20) from Kluyveromyces lactis (strain ATCC 8585 / CBS 2359 / DSM 70799 / NBRC 1267 / NRRL Y-1140 / WM37) (Yeast).